A 208-amino-acid polypeptide reads, in one-letter code: Small ribosomal subunit protein uS4 (208 aa).

The region spanning 98 to 160 is the S4 RNA-binding domain; it reads SRLDNVAYNM…AKSYLRIKSS (63 aa).

It belongs to the universal ribosomal protein uS4 family. As to quaternary structure, part of the 30S ribosomal subunit. Contacts protein S5. The interaction surface between S4 and S5 is involved in control of translational fidelity.

Its function is as follows. One of the primary rRNA binding proteins, it binds directly to 16S rRNA where it nucleates assembly of the body of the 30S subunit. In terms of biological role, with S5 and S12 plays an important role in translational accuracy. The sequence is that of Small ribosomal subunit protein uS4 from Nitrosomonas eutropha (strain DSM 101675 / C91 / Nm57).